The primary structure comprises 638 residues: Threonine--tRNA ligase (638 aa).

The TGS domain occupies 1-61 (MVAITLPDGK…DRDVNLSIIT (61 aa)). Residues 244 to 536 (DHRRLGREME…LIENFAGRFP (293 aa)) are catalytic. C336, H387, and H513 together coordinate Zn(2+).

This sequence belongs to the class-II aminoacyl-tRNA synthetase family. In terms of assembly, homodimer. It depends on Zn(2+) as a cofactor.

The protein localises to the cytoplasm. It carries out the reaction tRNA(Thr) + L-threonine + ATP = L-threonyl-tRNA(Thr) + AMP + diphosphate + H(+). Its function is as follows. Catalyzes the attachment of threonine to tRNA(Thr) in a two-step reaction: L-threonine is first activated by ATP to form Thr-AMP and then transferred to the acceptor end of tRNA(Thr). Also edits incorrectly charged L-seryl-tRNA(Thr). This is Threonine--tRNA ligase from Paramagnetospirillum magneticum (strain ATCC 700264 / AMB-1) (Magnetospirillum magneticum).